The chain runs to 670 residues: Meiotic sister-chromatid recombination protein 6, mitochondrial (670 aa).

The N-terminal 27 residues, 1-27 (MLFSRASKIRVSQLMRRLQSTAVGRAA), are a transit peptide targeting the mitochondrion.

The protein resides in the mitochondrion. Functionally, may be involved in the control of meiotic sister-chromatid recombination. This Eremothecium gossypii (strain ATCC 10895 / CBS 109.51 / FGSC 9923 / NRRL Y-1056) (Yeast) protein is Meiotic sister-chromatid recombination protein 6, mitochondrial (MSC6).